We begin with the raw amino-acid sequence, 381 residues long: UDP-4-amino-4-deoxy-L-arabinose--oxoglutarate aminotransferase (381 aa).

Lysine 182 carries the N6-(pyridoxal phosphate)lysine modification.

This sequence belongs to the DegT/DnrJ/EryC1 family. ArnB subfamily. As to quaternary structure, homodimer. Requires pyridoxal 5'-phosphate as cofactor.

The enzyme catalyses UDP-4-amino-4-deoxy-beta-L-arabinose + 2-oxoglutarate = UDP-beta-L-threo-pentopyranos-4-ulose + L-glutamate. Its pathway is nucleotide-sugar biosynthesis; UDP-4-deoxy-4-formamido-beta-L-arabinose biosynthesis; UDP-4-deoxy-4-formamido-beta-L-arabinose from UDP-alpha-D-glucuronate: step 2/3. The protein operates within bacterial outer membrane biogenesis; lipopolysaccharide biosynthesis. In terms of biological role, catalyzes the conversion of UDP-4-keto-arabinose (UDP-Ara4O) to UDP-4-amino-4-deoxy-L-arabinose (UDP-L-Ara4N). The modified arabinose is attached to lipid A and is required for resistance to polymyxin and cationic antimicrobial peptides. In Proteus mirabilis (strain HI4320), this protein is UDP-4-amino-4-deoxy-L-arabinose--oxoglutarate aminotransferase.